The primary structure comprises 365 residues: Probable G-protein coupled receptor 142 (365 aa).

Topologically, residues 1 to 66 are extracellular; that stretch reads MHLNSNPNSY…WPESPERSPC (66 aa). N-linked (GlcNAc...) asparagine glycosylation occurs at Asn-44. The helical transmembrane segment at 67-87 threads the bilayer; that stretch reads VAGIIPVIYYSVLLSLGLPVA. Topologically, residues 88–102 are cytoplasmic; that stretch reads LARLAARTRKPSYHY. A helical transmembrane segment spans residues 103 to 123; the sequence is LLALTASDIVTQVIIVFVGFL. At 124–140 the chain is on the extracellular side; that stretch reads LQGAVLARQVPQAVVRT. The chain crosses the membrane as a helical span at residues 141-161; it reads ANILEFAANHASVWIAVLFTV. Residues 162-185 lie on the Cytoplasmic side of the membrane; the sequence is DRYNALCRPLRHRATSSPGRTHRA. The chain crosses the membrane as a helical span at residues 186–206; the sequence is IAAVIGVTLLTGIPFYWWLDV. Topologically, residues 207–224 are extracellular; the sequence is WRDADPPSTMDKLLKWAH. The chain crosses the membrane as a helical span at residues 225 to 245; the sequence is CLIVYFIPCNVFLVTNSAIIL. At 246–264 the chain is on the cytoplasmic side; sequence RLRKRGQRGLRPLVSKSTA. Residues 265–285 traverse the membrane as a helical segment; sequence ILLGVTSLFALLWAPRIIVML. Residues 286 to 304 lie on the Extracellular side of the membrane; it reads YHLYVAPVHRDWRVHLALD. Residues 305 to 325 form a helical membrane-spanning segment; the sequence is IANMLAMLNTEVNFGLYCFIS. The Cytoplasmic segment spans residues 326 to 365; the sequence is KTFRATVRQVICDVHMACALKSQPKQTVVELMLKSVGTEL.

Belongs to the G-protein coupled receptor 1 family.

It localises to the cell membrane. In terms of biological role, orphan receptor. This is Probable G-protein coupled receptor 142 (Gpr142) from Mus musculus (Mouse).